Reading from the N-terminus, the 154-residue chain is MKKTIGLILILASFGSHARTEIATKNFPVSTTISKSFFAPEPQIQPSFGKNVGKEGGLLFSVSLTVPENVSQVTVYPVYDEDYGLGRLVNTADDSQSIIYQIVDDKGRKMLKDHGAEVTPNQQITFRALNYTSGDKEIPPGIYNDQVMVGYYVN.

An N-terminal signal peptide occupies residues 1–18 (MKKTIGLILILASFGSHA).

It is found in the fimbrium. In terms of biological role, fimbriae (also called pili), polar filaments radiating from the surface of the bacterium to a length of 0.5-1.5 micrometers and numbering 100-300 per cell, enable bacteria to colonize the epithelium of specific host organs. The chain is CS6 fimbrial subunit A (cssA) from Escherichia coli.